A 432-amino-acid polypeptide reads, in one-letter code: 3-phosphoshikimate 1-carboxyvinyltransferase (432 aa).

Positions 23, 24, and 28 each coordinate 3-phosphoshikimate. Phosphoenolpyruvate is bound at residue K23. G96 and R125 together coordinate phosphoenolpyruvate. 4 residues coordinate 3-phosphoshikimate: S170, Q172, D318, and K345. Q172 contributes to the phosphoenolpyruvate binding site. The Proton acceptor role is filled by D318. Phosphoenolpyruvate contacts are provided by R349 and R391.

This sequence belongs to the EPSP synthase family. In terms of assembly, monomer.

The protein resides in the cytoplasm. The enzyme catalyses 3-phosphoshikimate + phosphoenolpyruvate = 5-O-(1-carboxyvinyl)-3-phosphoshikimate + phosphate. Its pathway is metabolic intermediate biosynthesis; chorismate biosynthesis; chorismate from D-erythrose 4-phosphate and phosphoenolpyruvate: step 6/7. Its function is as follows. Catalyzes the transfer of the enolpyruvyl moiety of phosphoenolpyruvate (PEP) to the 5-hydroxyl of shikimate-3-phosphate (S3P) to produce enolpyruvyl shikimate-3-phosphate and inorganic phosphate. The sequence is that of 3-phosphoshikimate 1-carboxyvinyltransferase from Gloeobacter violaceus (strain ATCC 29082 / PCC 7421).